The chain runs to 243 residues: Complement C1q tumor necrosis factor-related protein 5 (243 aa).

The first 15 residues, 1–15 (MRPLLALLLLGLASG), serve as a signal peptide directing secretion. The segment at 15 to 124 (GSPPLDDNKI…VPPPADTPLP (110 aa)) is disordered. Residues 30 to 95 (GQPGLPGTPG…AGPVGAIGPA (66 aa)) form the Collagen-like domain. The region spanning 99-238 (SVPPRSAFSA…GFLVYSDWHS (140 aa)) is the C1q domain.

As to quaternary structure, homotrimer (via collagen-like domain). May form higher order oligomers by supercoiling of the trimers. May interact with ERFE.

It is found in the secreted. In Rattus norvegicus (Rat), this protein is Complement C1q tumor necrosis factor-related protein 5 (C1qtnf5).